The primary structure comprises 389 residues: Chalcone synthase E (389 aa).

Residue Cys164 is part of the active site.

The protein belongs to the thiolase-like superfamily. Chalcone/stilbene synthases family.

It carries out the reaction (E)-4-coumaroyl-CoA + 3 malonyl-CoA + 3 H(+) = 2',4,4',6'-tetrahydroxychalcone + 3 CO2 + 4 CoA. It functions in the pathway secondary metabolite biosynthesis; flavonoid biosynthesis. In terms of biological role, the primary product of this enzyme is 4,2',4',6'-tetrahydroxychalcone (also termed naringenin-chalcone or chalcone) which can under specific conditions spontaneously isomerize into naringenin. The chain is Chalcone synthase E (CHSE) from Ipomoea purpurea (Common morning glory).